Consider the following 135-residue polypeptide: Transcription antitermination protein NusB (135 aa).

The protein belongs to the NusB family.

Involved in transcription antitermination. Required for transcription of ribosomal RNA (rRNA) genes. Binds specifically to the boxA antiterminator sequence of the ribosomal RNA (rrn) operons. This is Transcription antitermination protein NusB from Shewanella pealeana (strain ATCC 700345 / ANG-SQ1).